The chain runs to 522 residues: Amphoterin-induced protein 2 (522 aa).

The signal sequence occupies residues 1 to 39 (MSLRVHTLPTLLGAVVRPGCRELLCLLMITVAVGPGASG). The LRRNT domain occupies 40-68 (VCPTACICATDIVSCTNKHLSKVPGNLFR). Residues 40–398 (VCPTACICAT…RSHAHEAFNT (359 aa)) are Extracellular-facing. Intrachain disulfides connect C41–C47 and C45–C54. LRR repeat units follow at residues 69-90 (LMKR…WIPV), 94-115 (KLNT…SFST), 118-139 (NLKC…VFQE), 142-163 (VLEV…AFGG), 166-187 (QLQK…LYVG), and 193-214 (ELMF…HINL). N-linked (GlcNAc...) asparagine glycosylation is present at N104. One can recognise an LRRCT domain in the interval 228–284 (NPFVCDCSLYSLLVFWYRRHFSSVMDFKNDYTCRLWSDSRHSRQVLLLQDSFMNCSD). Disulfide bonds link C232–C260 and C234–C282. 6 N-linked (GlcNAc...) asparagine glycosylation sites follow: N281, N288, N345, N373, N381, and N384. In terms of domain architecture, Ig-like C2-type spans 289–379 (GSFRALGFIH…RLLNETVDVT (91 aa)). Residues C310 and C363 are joined by a disulfide bond. The chain crosses the membrane as a helical span at residues 399–419 (AFTTLAACVASIVLVLLYLYL). Residues 420-522 (TPCPCKCKTK…FSDTPFVAST (103 aa)) are Cytoplasmic-facing. The tract at residues 501–522 (RGKSDSDSVNSVFSDTPFVAST) is disordered.

It belongs to the immunoglobulin superfamily. AMIGO family. Binds itself as well as AMIGO1 and AMIGO3.

Its subcellular location is the cell membrane. The protein localises to the nucleus. In terms of biological role, required for depolarization-dependent survival of cultured cerebellar granule neurons. May mediate homophilic as well as heterophilic cell-cell interaction with AMIGO1 or AMIGO3. May contribute to signal transduction through its intracellular domain. The protein is Amphoterin-induced protein 2 of Pongo abelii (Sumatran orangutan).